Here is a 384-residue protein sequence, read N- to C-terminus: CDP-diacylglycerol--serine O-phosphatidyltransferase (384 aa).

It belongs to the CDP-alcohol phosphatidyltransferase class-I family.

It localises to the membrane. It catalyses the reaction a CDP-1,2-diacyl-sn-glycerol + L-serine = a 1,2-diacyl-sn-glycero-3-phospho-L-serine + CMP + H(+). It functions in the pathway phospholipid metabolism; phosphatidylethanolamine biosynthesis; phosphatidylethanolamine from CDP-diacylglycerol: step 1/2. The sequence is that of CDP-diacylglycerol--serine O-phosphatidyltransferase (PSS) from Encephalitozoon cuniculi (strain GB-M1) (Microsporidian parasite).